The sequence spans 309 residues: ATP synthase gamma chain (309 aa).

It belongs to the ATPase gamma chain family. F-type ATPases have 2 components, CF(1) - the catalytic core - and CF(0) - the membrane proton channel. CF(1) has five subunits: alpha(3), beta(3), gamma(1), delta(1), epsilon(1). CF(0) has three main subunits: a, b and c.

It is found in the cell membrane. In terms of biological role, produces ATP from ADP in the presence of a proton gradient across the membrane. The gamma chain is believed to be important in regulating ATPase activity and the flow of protons through the CF(0) complex. This Mycobacterium sp. (strain JLS) protein is ATP synthase gamma chain.